A 210-amino-acid chain; its full sequence is Protein GrpE (210 aa).

The disordered stretch occupies residues 1 to 31; that stretch reads MAKDPQTPTDEELARAERDAEPQPGDATDDE. Residues 12–21 are compositionally biased toward basic and acidic residues; sequence ELARAERDAE.

This sequence belongs to the GrpE family. In terms of assembly, homodimer.

Its subcellular location is the cytoplasm. Functionally, participates actively in the response to hyperosmotic and heat shock by preventing the aggregation of stress-denatured proteins, in association with DnaK and GrpE. It is the nucleotide exchange factor for DnaK and may function as a thermosensor. Unfolded proteins bind initially to DnaJ; upon interaction with the DnaJ-bound protein, DnaK hydrolyzes its bound ATP, resulting in the formation of a stable complex. GrpE releases ADP from DnaK; ATP binding to DnaK triggers the release of the substrate protein, thus completing the reaction cycle. Several rounds of ATP-dependent interactions between DnaJ, DnaK and GrpE are required for fully efficient folding. This is Protein GrpE from Chromohalobacter salexigens (strain ATCC BAA-138 / DSM 3043 / CIP 106854 / NCIMB 13768 / 1H11).